The following is a 597-amino-acid chain: CTP synthase (597 aa).

The amidoligase domain stretch occupies residues 1 to 272 (MARPKNVKYV…DMRVLKKLGL (272 aa)). Ser-18 lines the CTP pocket. Residue Ser-18 participates in UTP binding. Position 19–24 (19–24 (SLGKGI)) interacts with ATP. Tyr-59 provides a ligand contact to L-glutamine. Residue Asp-76 participates in ATP binding. Positions 76 and 146 each coordinate Mg(2+). CTP contacts are provided by residues 153–155 (DIE), 193–198 (KTKPTQ), and Lys-229. Residues 193–198 (KTKPTQ) and Lys-229 each bind UTP. The region spanning 299–543 (NVAICGKYTE…VGAAKAYADG (245 aa)) is the Glutamine amidotransferase type-1 domain. Gly-363 lines the L-glutamine pocket. The Nucleophile; for glutamine hydrolysis role is filled by Cys-390. L-glutamine contacts are provided by residues 391 to 394 (LGMQ), Glu-414, and Arg-471. Residues His-516 and Glu-518 contribute to the active site.

This sequence belongs to the CTP synthase family. As to quaternary structure, homotetramer.

It catalyses the reaction UTP + L-glutamine + ATP + H2O = CTP + L-glutamate + ADP + phosphate + 2 H(+). It carries out the reaction L-glutamine + H2O = L-glutamate + NH4(+). The enzyme catalyses UTP + NH4(+) + ATP = CTP + ADP + phosphate + 2 H(+). It participates in pyrimidine metabolism; CTP biosynthesis via de novo pathway; CTP from UDP: step 2/2. With respect to regulation, allosterically activated by GTP, when glutamine is the substrate; GTP has no effect on the reaction when ammonia is the substrate. The allosteric effector GTP functions by stabilizing the protein conformation that binds the tetrahedral intermediate(s) formed during glutamine hydrolysis. Inhibited by the product CTP, via allosteric rather than competitive inhibition. Catalyzes the ATP-dependent amination of UTP to CTP with either L-glutamine or ammonia as the source of nitrogen. Regulates intracellular CTP levels through interactions with the four ribonucleotide triphosphates. This chain is CTP synthase, found in Chlorobium luteolum (strain DSM 273 / BCRC 81028 / 2530) (Pelodictyon luteolum).